The following is a 299-amino-acid chain: 4-hydroxybenzoate octaprenyltransferase (299 aa).

Helical transmembrane passes span 34-54 (IGSLLLLWPTWWALWLAADGL), 57-77 (LWTLFVFTAGVWLTRSAGCVI), 108-128 (LWVFVVLMLVAFALVFTLNWL), 163-183 (WGIPMAFAAVQGSVPVLGWLL), 221-241 (FDLVAQGILYALMFAVLALVD), 245-265 (DLGAAYWAGLGVAALLVAYEF), and 277-297 (FRAFLHNNWVGLAIFVGIAVA).

Belongs to the UbiA prenyltransferase family. Requires Mg(2+) as cofactor.

It localises to the cell inner membrane. The catalysed reaction is all-trans-octaprenyl diphosphate + 4-hydroxybenzoate = 4-hydroxy-3-(all-trans-octaprenyl)benzoate + diphosphate. Its pathway is cofactor biosynthesis; ubiquinone biosynthesis. Catalyzes the prenylation of para-hydroxybenzoate (PHB) with an all-trans polyprenyl group. Mediates the second step in the final reaction sequence of ubiquinone-8 (UQ-8) biosynthesis, which is the condensation of the polyisoprenoid side chain with PHB, generating the first membrane-bound Q intermediate 3-octaprenyl-4-hydroxybenzoate. The chain is 4-hydroxybenzoate octaprenyltransferase from Xanthomonas oryzae pv. oryzae (strain MAFF 311018).